The primary structure comprises 207 residues: Urease accessory protein UreG (207 aa).

14-21 (GPVGSGKT) provides a ligand contact to GTP.

The protein belongs to the SIMIBI class G3E GTPase family. UreG subfamily. In terms of assembly, homodimer. UreD, UreF and UreG form a complex that acts as a GTP-hydrolysis-dependent molecular chaperone, activating the urease apoprotein by helping to assemble the nickel containing metallocenter of UreC. The UreE protein probably delivers the nickel.

The protein resides in the cytoplasm. Its function is as follows. Facilitates the functional incorporation of the urease nickel metallocenter. This process requires GTP hydrolysis, probably effectuated by UreG. The chain is Urease accessory protein UreG from Tolumonas auensis (strain DSM 9187 / NBRC 110442 / TA 4).